Reading from the N-terminus, the 413-residue chain is Arginine biosynthesis bifunctional protein ArgJ (413 aa).

Thr-158, Lys-184, Thr-195, Glu-285, Asn-408, and Ser-413 together coordinate substrate. Residue Thr-195 is the Nucleophile of the active site.

The protein belongs to the ArgJ family. As to quaternary structure, heterotetramer of two alpha and two beta chains.

It is found in the cytoplasm. The catalysed reaction is N(2)-acetyl-L-ornithine + L-glutamate = N-acetyl-L-glutamate + L-ornithine. It catalyses the reaction L-glutamate + acetyl-CoA = N-acetyl-L-glutamate + CoA + H(+). It functions in the pathway amino-acid biosynthesis; L-arginine biosynthesis; L-ornithine and N-acetyl-L-glutamate from L-glutamate and N(2)-acetyl-L-ornithine (cyclic): step 1/1. It participates in amino-acid biosynthesis; L-arginine biosynthesis; N(2)-acetyl-L-ornithine from L-glutamate: step 1/4. Catalyzes two activities which are involved in the cyclic version of arginine biosynthesis: the synthesis of N-acetylglutamate from glutamate and acetyl-CoA as the acetyl donor, and of ornithine by transacetylation between N(2)-acetylornithine and glutamate. This chain is Arginine biosynthesis bifunctional protein ArgJ, found in Brucella suis biovar 1 (strain 1330).